The chain runs to 450 residues: 23S rRNA (uracil(1939)-C(5))-methyltransferase RlmD (450 aa).

The region spanning 1–62 (MPVAGPLDIV…PSYEQAGVVN (62 aa)) is the TRAM domain. Cysteine 75, cysteine 81, cysteine 84, and cysteine 163 together coordinate [4Fe-4S] cluster. 6 residues coordinate S-adenosyl-L-methionine: glutamine 271, phenylalanine 300, asparagine 305, glutamate 321, asparagine 349, and aspartate 370. Residue cysteine 406 is the Nucleophile of the active site.

This sequence belongs to the class I-like SAM-binding methyltransferase superfamily. RNA M5U methyltransferase family. RlmD subfamily.

It carries out the reaction uridine(1939) in 23S rRNA + S-adenosyl-L-methionine = 5-methyluridine(1939) in 23S rRNA + S-adenosyl-L-homocysteine + H(+). In terms of biological role, catalyzes the formation of 5-methyl-uridine at position 1939 (m5U1939) in 23S rRNA. This is 23S rRNA (uracil(1939)-C(5))-methyltransferase RlmD from Ralstonia pickettii (strain 12J).